Here is a 209-residue protein sequence, read N- to C-terminus: Uracil phosphoribosyltransferase (209 aa).

Residues R79, R104, and 131 to 139 (DPMLATGGS) contribute to the 5-phospho-alpha-D-ribose 1-diphosphate site. Uracil is bound by residues I194 and 199–201 (GDA). D200 is a 5-phospho-alpha-D-ribose 1-diphosphate binding site.

This sequence belongs to the UPRTase family. Mg(2+) is required as a cofactor.

The enzyme catalyses UMP + diphosphate = 5-phospho-alpha-D-ribose 1-diphosphate + uracil. The protein operates within pyrimidine metabolism; UMP biosynthesis via salvage pathway; UMP from uracil: step 1/1. With respect to regulation, allosterically activated by GTP. Its function is as follows. Catalyzes the conversion of uracil and 5-phospho-alpha-D-ribose 1-diphosphate (PRPP) to UMP and diphosphate. The protein is Uracil phosphoribosyltransferase of Streptococcus thermophilus (strain CNRZ 1066).